We begin with the raw amino-acid sequence, 469 residues long: Histone chaperone rtt-106 (469 aa).

Disordered stretches follow at residues Glu-54–Ala-73 and Met-364–Glu-469. Composition is skewed to basic and acidic residues over residues Met-364–Lys-379 and Glu-402–Gln-415. Acidic residues-rich tracts occupy residues Asp-416–Ser-433 and Ser-440–Glu-469.

It belongs to the RTT106 family. In terms of assembly, interacts with histones H3 and H4.

The protein resides in the nucleus. Its subcellular location is the chromosome. In terms of biological role, histones H3 and H4 chaperone involved in the nucleosome formation and heterochromatin silencing. Required for the deposition of H3K56ac-carrying H3-H4 complex onto newly-replicated DNA. Plays a role in the transcriptional regulation of the cell-cycle dependent histone genes by creating a repressive structure at the core histone gene promoter. The sequence is that of Histone chaperone rtt-106 (rtt-106) from Neurospora crassa (strain ATCC 24698 / 74-OR23-1A / CBS 708.71 / DSM 1257 / FGSC 987).